The following is a 445-amino-acid chain: 8-amino-7-oxononanoate synthase (445 aa).

R40 serves as a coordination point for substrate. 131–132 (GY) contacts pyridoxal 5'-phosphate. H156 is a binding site for substrate. The pyridoxal 5'-phosphate site is built by S202, H230, and T258. The residue at position 261 (K261) is an N6-(pyridoxal phosphate)lysine. T377 is a binding site for substrate. The disordered stretch occupies residues 408-445 (ASEGQTRRDAEQPPRSLRSLPPEGAAASLGAARRETAA).

The protein belongs to the class-II pyridoxal-phosphate-dependent aminotransferase family. BioF subfamily. In terms of assembly, homodimer. Pyridoxal 5'-phosphate serves as cofactor.

It catalyses the reaction 6-carboxyhexanoyl-[ACP] + L-alanine + H(+) = (8S)-8-amino-7-oxononanoate + holo-[ACP] + CO2. It participates in cofactor biosynthesis; biotin biosynthesis. Functionally, catalyzes the decarboxylative condensation of pimeloyl-[acyl-carrier protein] and L-alanine to produce 8-amino-7-oxononanoate (AON), [acyl-carrier protein], and carbon dioxide. The protein is 8-amino-7-oxononanoate synthase of Burkholderia ambifaria (strain MC40-6).